Consider the following 351-residue polypeptide: Ribonucleoside-diphosphate reductase subunit beta (351 aa).

Fe cation is bound by residues aspartate 94, glutamate 124, and histidine 127. Tyrosine 131 is an active-site residue. Glutamate 191, glutamate 225, and histidine 228 together coordinate Fe cation.

The protein belongs to the ribonucleoside diphosphate reductase small chain family. In terms of assembly, tetramer of two alpha and two beta subunits. It depends on Fe cation as a cofactor.

It carries out the reaction a 2'-deoxyribonucleoside 5'-diphosphate + [thioredoxin]-disulfide + H2O = a ribonucleoside 5'-diphosphate + [thioredoxin]-dithiol. In terms of biological role, provides the precursors necessary for DNA synthesis. Catalyzes the biosynthesis of deoxyribonucleotides from the corresponding ribonucleotides. The polypeptide is Ribonucleoside-diphosphate reductase subunit beta (nrdB) (Treponema pallidum (strain Nichols)).